The primary structure comprises 327 residues: 7,8-didemethyl-8-hydroxy-5-deazariboflavin synthase (327 aa).

The Radical SAM core domain maps to 6–244; that stretch reads ITFSRNVFLP…EEVAVQVAPN (239 aa). 3 residues coordinate [4Fe-4S] cluster: cysteine 20, cysteine 24, and cysteine 27.

It belongs to the radical SAM superfamily. CofG family. In terms of assembly, consists of two subunits, CofG and CofH. Requires [4Fe-4S] cluster as cofactor.

It carries out the reaction 5-amino-5-(4-hydroxybenzyl)-6-(D-ribitylimino)-5,6-dihydrouracil + S-adenosyl-L-methionine = 7,8-didemethyl-8-hydroxy-5-deazariboflavin + 5'-deoxyadenosine + L-methionine + NH4(+) + H(+). Its pathway is cofactor biosynthesis; coenzyme F0 biosynthesis. Catalyzes the radical-mediated synthesis of 7,8-didemethyl-8-hydroxy-5-deazariboflavin from 5-amino-5-(4-hydroxybenzyl)-6-(D-ribitylimino)-5,6-dihydrouracil. This is 7,8-didemethyl-8-hydroxy-5-deazariboflavin synthase from Methanosphaerula palustris (strain ATCC BAA-1556 / DSM 19958 / E1-9c).